The primary structure comprises 503 residues: ATP synthase subunit alpha (503 aa).

ATP is bound at residue 170–177; the sequence is GDRKTGKT.

This sequence belongs to the ATPase alpha/beta chains family. As to quaternary structure, F-type ATPases have 2 components, CF(1) - the catalytic core - and CF(0) - the membrane proton channel. CF(1) has five subunits: alpha(3), beta(3), gamma(1), delta(1), epsilon(1). CF(0) has four main subunits: a, b, b' and c.

It is found in the cellular thylakoid membrane. The catalysed reaction is ATP + H2O + 4 H(+)(in) = ADP + phosphate + 5 H(+)(out). Its function is as follows. Produces ATP from ADP in the presence of a proton gradient across the membrane. The alpha chain is a regulatory subunit. The polypeptide is ATP synthase subunit alpha (Rippkaea orientalis (strain PCC 8801 / RF-1) (Cyanothece sp. (strain PCC 8801))).